Reading from the N-terminus, the 1113-residue chain is Cytospin-A (1113 aa).

The interval 1–160 (MKKSVRPAAS…KSKSDGQISD (160 aa)) is disordered. Polar residues predominate over residues 59–103 (ASCNAVSKSKRTTSVGTTASTLDSKPKTASGTTSKRLASSLSKET). Residues 145–154 (SEGRMSKSKS) show a composition bias toward basic and acidic residues. Residues 220–259 (AADVESTLILLQEQNQAIREELNLLKSENRMLKDRLNALG) adopt a coiled-coil conformation. The tract at residues 284–374 (AGSGQSDGGG…RRGSSGNASE (91 aa)) is disordered. Over residues 338 to 358 (SSDDALDAPSGASSSSESECA) the composition is skewed to low complexity. Coiled-coil stretches lie at residues 379–433 (CLTE…MDSL) and 473–791 (MELE…RGRV). Disordered regions lie at residues 766 to 785 (QEKN…RKQD), 832 to 902 (FDSA…PTYP), 914 to 957 (GSAA…DGAS), and 972 to 997 (ALAS…RKDP). Residues 834–845 (SASQGPPSSGAS) show a composition bias toward low complexity. A compositionally biased stretch (pro residues) spans 856–867 (PRTPLSPSPMKT). Positions 925 to 940 (QRVSNMDSTKAISVSR) are enriched in polar residues. The span at 941-951 (RSSEEMKRDMA) shows a compositional bias: basic and acidic residues. Over residues 972–981 (ALASSSPTAS) the composition is skewed to low complexity. Residues 1007–1112 (GSKRNALLKW…YVTAIYKYFE (106 aa)) form the Calponin-homology (CH) domain.

It belongs to the cytospin-A family. As to quaternary structure, may interact with both microtubules and actin cytoskeleton.

The protein localises to the cytoplasm. The protein resides in the cytoskeleton. It localises to the spindle. Its subcellular location is the cell junction. It is found in the gap junction. Functionally, involved in cytokinesis and spindle organization. May play a role in actin cytoskeleton organization and microtubule stabilization and hence required for proper cell adhesion and migration. The chain is Cytospin-A (specc1l) from Tetraodon nigroviridis (Spotted green pufferfish).